The primary structure comprises 601 residues: Phosphomethylpyrimidine synthase (601 aa).

2 disordered regions span residues 1-31 (MTNK…GKSI) and 100-141 (AGRP…RDGQ). The segment covering 100 to 112 (AGRPVRPEDDGIK) has biased composition (basic and acidic residues). Substrate is bound by residues Asn-208, Met-237, Tyr-266, His-302, 322 to 324 (SRG), 363 to 366 (DGLR), and Glu-402. Position 406 (His-406) interacts with Zn(2+). A substrate-binding site is contributed by Tyr-429. His-470 provides a ligand contact to Zn(2+). Residues Cys-550, Cys-553, and Cys-558 each coordinate [4Fe-4S] cluster.

The protein belongs to the ThiC family. It depends on [4Fe-4S] cluster as a cofactor.

It catalyses the reaction 5-amino-1-(5-phospho-beta-D-ribosyl)imidazole + S-adenosyl-L-methionine = 4-amino-2-methyl-5-(phosphooxymethyl)pyrimidine + CO + 5'-deoxyadenosine + formate + L-methionine + 3 H(+). It functions in the pathway cofactor biosynthesis; thiamine diphosphate biosynthesis. In terms of biological role, catalyzes the synthesis of the hydroxymethylpyrimidine phosphate (HMP-P) moiety of thiamine from aminoimidazole ribotide (AIR) in a radical S-adenosyl-L-methionine (SAM)-dependent reaction. In Streptomyces avermitilis (strain ATCC 31267 / DSM 46492 / JCM 5070 / NBRC 14893 / NCIMB 12804 / NRRL 8165 / MA-4680), this protein is Phosphomethylpyrimidine synthase.